We begin with the raw amino-acid sequence, 518 residues long: MAKTDTASFDSILVLDFGSQYNQLITRRIRDFGVYSELLPNTITAEEIKARHPKGIIFSGGPNSVYDDGAFRVDPEIFKLGLPILGICYGMQLMTYTLAGGKVESADNREYGKANIDVTSDSATLFKDTPAEQSVWMSHGDLVTQAPDGFDVVATSKNCPIAAIQDVDRKLYGIQFHAEVRNTDYGNDILRHFAFDVCQAEANWSMDDFIDMQIEKIRAEVGDKKVLLGLSGGVDSSVVGVLLHKAIGTQLTSIFVDHGLLRKGEADQVMASLEGKFGLNIIKVDAKDRFLSKLAGVSDPERKRKIIGNEFIQVFDEEATKLNGMEFLAQGTLYTDVIESGTSTAQTIKSHHNVGGLPEDMQFKLIEPLRTLFKDEARELGEKLGMPSDLVWRQPFPGPGLGIRVIGEITEDKLEIVRDSDFILRDEIKKAGLDREIWQYFTVLPGIKSVGVMGDGRTYDYTVGIRAVTSIDGMTADFARIPWDVLQKISVRIVNEVDHVNRIVYDVTSKPPSTIEWE.

The Glutamine amidotransferase type-1 domain maps to Ser11–Asn203. Residue Cys88 is the Nucleophile of the active site. Active-site residues include His177 and Glu179. In terms of domain architecture, GMPS ATP-PPase spans Trp204–Arg393. Ser231–Ser237 lines the ATP pocket.

Homodimer.

It carries out the reaction XMP + L-glutamine + ATP + H2O = GMP + L-glutamate + AMP + diphosphate + 2 H(+). The protein operates within purine metabolism; GMP biosynthesis; GMP from XMP (L-Gln route): step 1/1. Its function is as follows. Catalyzes the synthesis of GMP from XMP. The protein is GMP synthase [glutamine-hydrolyzing] of Lactiplantibacillus plantarum (strain ATCC BAA-793 / NCIMB 8826 / WCFS1) (Lactobacillus plantarum).